A 71-amino-acid polypeptide reads, in one-letter code: Small ribosomal subunit protein bS21 (71 aa).

Residues 39–71 (EKPTTVRKRAKAAAQKRHAKKLARENARRVRLY) are disordered. Residues 43–59 (TVRKRAKAAAQKRHAKK) show a composition bias toward basic residues. The span at 60 to 71 (LARENARRVRLY) shows a compositional bias: basic and acidic residues.

Belongs to the bacterial ribosomal protein bS21 family.

This is Small ribosomal subunit protein bS21 from Vibrio atlanticus (strain LGP32) (Vibrio splendidus (strain Mel32)).